A 190-amino-acid chain; its full sequence is dTTP/UTP pyrophosphatase (190 aa).

The active-site Proton acceptor is the aspartate 69.

This sequence belongs to the Maf family. YhdE subfamily. A divalent metal cation is required as a cofactor.

It localises to the cytoplasm. It carries out the reaction dTTP + H2O = dTMP + diphosphate + H(+). The enzyme catalyses UTP + H2O = UMP + diphosphate + H(+). Its function is as follows. Nucleoside triphosphate pyrophosphatase that hydrolyzes dTTP and UTP. May have a dual role in cell division arrest and in preventing the incorporation of modified nucleotides into cellular nucleic acids. This is dTTP/UTP pyrophosphatase from Sphingopyxis alaskensis (strain DSM 13593 / LMG 18877 / RB2256) (Sphingomonas alaskensis).